The primary structure comprises 119 residues: Large ribosomal subunit protein bL20 (119 aa).

This sequence belongs to the bacterial ribosomal protein bL20 family.

Its function is as follows. Binds directly to 23S ribosomal RNA and is necessary for the in vitro assembly process of the 50S ribosomal subunit. It is not involved in the protein synthesizing functions of that subunit. The polypeptide is Large ribosomal subunit protein bL20 (Dichelobacter nodosus (strain VCS1703A)).